We begin with the raw amino-acid sequence, 495 residues long: 3-octaprenyl-4-hydroxybenzoate carboxy-lyase (495 aa).

Asparagine 172 is a Mn(2+) binding site. Residues 175–177, 189–191, and 194–195 contribute to the prenylated FMN site; these read IYR, RWL, and RG. Residue glutamate 238 participates in Mn(2+) binding. Aspartate 287 (proton donor) is an active-site residue.

The protein belongs to the UbiD family. Homohexamer. Prenylated FMN is required as a cofactor. The cofactor is Mn(2+).

Its subcellular location is the cell membrane. The catalysed reaction is a 4-hydroxy-3-(all-trans-polyprenyl)benzoate + H(+) = a 2-(all-trans-polyprenyl)phenol + CO2. It participates in cofactor biosynthesis; ubiquinone biosynthesis. In terms of biological role, catalyzes the decarboxylation of 3-octaprenyl-4-hydroxy benzoate to 2-octaprenylphenol, an intermediate step in ubiquinone biosynthesis. This chain is 3-octaprenyl-4-hydroxybenzoate carboxy-lyase, found in Edwardsiella ictaluri (strain 93-146).